The chain runs to 127 residues: Protein chibby homolog 1 (127 aa).

The tract at residues Met-1–His-25 is disordered. Phosphoserine is present on residues Ser-9 and Ser-20. The segment at Val-60–Lys-112 is minimal region for the interaction with PKD2. Residues Gly-68–His-110 are a coiled coil. Residues Leu-77 to Leu-98 are leucine-zipper; mediates homodimerization.

This sequence belongs to the chibby family. As to quaternary structure, homodimer. Homodimerization is essential for nuclear localization and interaction with KPNA4 but is dispensable for interaction with CTNNB1. Interacts with polycystin-2/PKD2 and GM130. Interacts with the C-terminal region of CTNNB1. Interacts (C-terminus) with TCIM (C-terminus), TCIM competes with CTNNB1 for the interaction with CBY1. Interacts with FAM92A; this interaction facilitates targeting of FAM92A to cilium basal body. Interacts with CIBAR2. Interacts with KPNA4. In terms of tissue distribution, found in heart, brain, lung, liver, muscle, kidney and testis. Levels are approximately 3-fold higher in embryonic and adult heart than in lung or liver.

It is found in the nucleus speckle. It localises to the cytoplasm. Its subcellular location is the cytoskeleton. The protein resides in the cilium basal body. The protein localises to the microtubule organizing center. It is found in the centrosome. It localises to the centriole. Its subcellular location is the golgi apparatus. The protein resides in the trans-Golgi network. The protein localises to the cell projection. It is found in the cilium. It localises to the flagellum. Its subcellular location is the nucleus. Its function is as follows. Inhibits the Wnt/Wingless pathway by binding to CTNNB1/beta-catenin and inhibiting beta-catenin-mediated transcriptional activation through competition with TCF/LEF transcription factors. Has also been shown to play a role in regulating the intracellular trafficking of polycystin-2/PKD2 and possibly of other intracellular proteins. Promotes adipocyte and cardiomyocyte differentiation. The polypeptide is Protein chibby homolog 1 (Cby1) (Mus musculus (Mouse)).